Reading from the N-terminus, the 272-residue chain is 2-succinyl-6-hydroxy-2,4-cyclohexadiene-1-carboxylate synthase (272 aa).

It belongs to the AB hydrolase superfamily. MenH family. In terms of assembly, monomer.

The catalysed reaction is 5-enolpyruvoyl-6-hydroxy-2-succinyl-cyclohex-3-ene-1-carboxylate = (1R,6R)-6-hydroxy-2-succinyl-cyclohexa-2,4-diene-1-carboxylate + pyruvate. Its pathway is quinol/quinone metabolism; 1,4-dihydroxy-2-naphthoate biosynthesis; 1,4-dihydroxy-2-naphthoate from chorismate: step 3/7. It functions in the pathway quinol/quinone metabolism; menaquinone biosynthesis. In terms of biological role, catalyzes a proton abstraction reaction that results in 2,5-elimination of pyruvate from 2-succinyl-5-enolpyruvyl-6-hydroxy-3-cyclohexene-1-carboxylate (SEPHCHC) and the formation of 2-succinyl-6-hydroxy-2,4-cyclohexadiene-1-carboxylate (SHCHC). The polypeptide is 2-succinyl-6-hydroxy-2,4-cyclohexadiene-1-carboxylate synthase (Yersinia pestis (strain Pestoides F)).